Reading from the N-terminus, the 235-residue chain is Small ribosomal subunit protein uS2c (235 aa).

Belongs to the universal ribosomal protein uS2 family.

The protein localises to the plastid. Its subcellular location is the chloroplast. The protein is Small ribosomal subunit protein uS2c (rps2) of Huperzia lucidula (Shining clubmoss).